The chain runs to 240 residues: Uridylate kinase (240 aa).

13–16 (KFSG) serves as a coordination point for ATP. G55 provides a ligand contact to UMP. G56 and R60 together coordinate ATP. UMP is bound by residues D76 and 137–144 (TGNPFFTT). Positions 164, 170, and 173 each coordinate ATP.

Belongs to the UMP kinase family. As to quaternary structure, homohexamer.

It localises to the cytoplasm. The enzyme catalyses UMP + ATP = UDP + ADP. It functions in the pathway pyrimidine metabolism; CTP biosynthesis via de novo pathway; UDP from UMP (UMPK route): step 1/1. Its activity is regulated as follows. Inhibited by UTP. Catalyzes the reversible phosphorylation of UMP to UDP. The sequence is that of Uridylate kinase from Helicobacter pylori (strain ATCC 700392 / 26695) (Campylobacter pylori).